The following is a 1679-amino-acid chain: Furin-like protease 2 (1679 aa).

The span at methionine 1–valine 10 shows a compositional bias: polar residues. The segment at methionine 1–serine 42 is disordered. 3 N-linked (GlcNAc...) asparagine glycosylation sites follow: asparagine 3, asparagine 109, and asparagine 130. Residues valine 139–aspartate 164 are disordered. Positions arginine 147–asparagine 160 are enriched in low complexity. The N-linked (GlcNAc...) asparagine glycan is linked to asparagine 205. Positions glutamine 383–valine 705 constitute a Peptidase S8 domain. Aspartate 417 (charge relay system) is an active-site residue. Positions histidine 424–histidine 456 are disordered. Residues isoleucine 439–asparagine 451 show a composition bias toward polar residues. Residue asparagine 442 is glycosylated (N-linked (GlcNAc...) asparagine). Residue histidine 456 is the Charge relay system of the active site. Disulfide bonds link cysteine 473–cysteine 629 and cysteine 565–cysteine 595. N-linked (GlcNAc...) asparagine glycosylation is present at asparagine 480. The active-site Charge relay system is serine 637. Positions valine 714 to glutamine 852 constitute a P/Homo B domain. Cysteine 720 and cysteine 748 form a disulfide bridge. N-linked (GlcNAc...) asparagine glycosylation occurs at asparagine 927. 10 FU repeats span residues lysine 961–proline 1006, valine 1009–glutamate 1056, asparagine 1060–glutamate 1104, aspartate 1107–alanine 1152, arginine 1156–tyrosine 1204, glutamate 1208–valine 1253, glycine 1256–serine 1299, arginine 1301–lysine 1346, aspartate 1348–aspartate 1393, and serine 1396–alanine 1443. Asparagine 1060 carries N-linked (GlcNAc...) asparagine glycosylation. Residue asparagine 1181 is glycosylated (N-linked (GlcNAc...) asparagine). Residues asparagine 1274 and asparagine 1277 are each glycosylated (N-linked (GlcNAc...) asparagine). N-linked (GlcNAc...) asparagine glycosylation occurs at asparagine 1439. The chain crosses the membrane as a helical span at residues alanine 1512–leucine 1532. Topologically, residues glutamine 1533 to serine 1679 are cytoplasmic. Positions threonine 1660–serine 1679 are disordered. The segment covering proline 1668 to serine 1679 has biased composition (polar residues).

This sequence belongs to the peptidase S8 family. Furin subfamily. It depends on Ca(2+) as a cofactor. Transient expression in a subset of central nervous system neurons during embryonic stages 12-13. Expression in developing tracheal tree from stage 13 to end of embryonic development.

It is found in the membrane. The enzyme catalyses Release of mature proteins from their proproteins by cleavage of -Arg-Xaa-Yaa-Arg-|-Zaa- bonds, where Xaa can be any amino acid and Yaa is Arg or Lys. Releases albumin, complement component C3 and von Willebrand factor from their respective precursors.. Its function is as follows. Furin is likely to represent the ubiquitous endoprotease activity within constitutive secretory pathways and capable of cleavage at the RX(K/R)R consensus motif. The chain is Furin-like protease 2 (Fur2) from Drosophila melanogaster (Fruit fly).